The following is a 43-amino-acid chain: Delta/kappa-actitoxin-Avd4a (43 aa).

3 disulfides stabilise this stretch: cysteine 4–cysteine 39, cysteine 6–cysteine 32, and cysteine 22–cysteine 40.

It belongs to the sea anemone type 3 (BDS) potassium channel toxin family.

It localises to the secreted. The protein resides in the nematocyst. Functionally, acts as a gating modifier on both Kv and Nav ion channels, and also acts on blood pressure. Voltage-dependently inhibits voltage-gated potassium channels Kv3 (Kv3.1/KCNC1, Kv3.2/KCNC2 and Kv3.4/KCNC4) and slows inactivation of the voltage-gated sodium channel Nav1.7/SCN9A. Inhibits all Kv3.1, Kv3.2 and Kv3.4 by about 50% when tested at a voltage of +40 mV (45%, 48% and 56%, respectively). May act by binding residues in voltage-sensing domains S3b and S4 of Kv3. On sodium channel, tests have been done on human Nav1.7/SCN9A (expressed in HEK293 cells) (EC(50)=3 nM) and rat SCG neurons that mostly carry Nav1.7 channels (EC(50)=300 nM). This toxin also reduces blood pressure. The chain is Delta/kappa-actitoxin-Avd4a from Anemonia sulcata (Mediterranean snakelocks sea anemone).